The primary structure comprises 848 residues: Trimethylamine-N-oxide reductase 1 (848 aa).

A signal peptide (tat-type signal) is located at residues 1-39 (MNNNDLFQASRRRFLAQLGGLTVAGMLGPSLLTPRRATA). Mo-bis(molybdopterin guanine dinucleotide) is bound at residue Ser191.

Belongs to the prokaryotic molybdopterin-containing oxidoreductase family. Interacts with the N-terminal domain of TorC. Mo-bis(molybdopterin guanine dinucleotide) is required as a cofactor. Exported by the Tat system. The position of the signal peptide cleavage has been experimentally proven.

It localises to the periplasm. It carries out the reaction trimethylamine + 2 Fe(III)-[cytochrome c] + H2O = trimethylamine N-oxide + 2 Fe(II)-[cytochrome c] + 3 H(+). Its function is as follows. Reduces trimethylamine-N-oxide (TMAO) into trimethylamine; an anaerobic reaction coupled to energy-yielding reactions. The sequence is that of Trimethylamine-N-oxide reductase 1 (torA) from Escherichia coli (strain K12).